Reading from the N-terminus, the 203-residue chain is NADH-quinone oxidoreductase subunit C (203 aa).

Belongs to the complex I 30 kDa subunit family. NDH-1 is composed of 14 different subunits. Subunits NuoB, C, D, E, F, and G constitute the peripheral sector of the complex.

It is found in the cell inner membrane. It catalyses the reaction a quinone + NADH + 5 H(+)(in) = a quinol + NAD(+) + 4 H(+)(out). NDH-1 shuttles electrons from NADH, via FMN and iron-sulfur (Fe-S) centers, to quinones in the respiratory chain. The immediate electron acceptor for the enzyme in this species is believed to be ubiquinone. Couples the redox reaction to proton translocation (for every two electrons transferred, four hydrogen ions are translocated across the cytoplasmic membrane), and thus conserves the redox energy in a proton gradient. The sequence is that of NADH-quinone oxidoreductase subunit C from Delftia acidovorans (strain DSM 14801 / SPH-1).